The sequence spans 117 residues: Large ribosomal subunit protein eL8 (117 aa).

It belongs to the eukaryotic ribosomal protein eL8 family. Part of the 50S ribosomal subunit. Probably part of the RNase P complex.

It localises to the cytoplasm. Functionally, multifunctional RNA-binding protein that recognizes the K-turn motif in ribosomal RNA, the RNA component of RNase P, box H/ACA, box C/D and box C'/D' sRNAs. In Methanocaldococcus jannaschii (strain ATCC 43067 / DSM 2661 / JAL-1 / JCM 10045 / NBRC 100440) (Methanococcus jannaschii), this protein is Large ribosomal subunit protein eL8.